Here is a 143-residue protein sequence, read N- to C-terminus: Large ribosomal subunit protein uL15 (143 aa).

The segment at 1–52 is disordered; it reads MKLNTLAPAAGSKSAPKRLGRGIGSGLGKTSGKGHKGQKARSGGYHKVGFEG. Residues 21–31 are compositionally biased toward gly residues; the sequence is RGIGSGLGKTS.

This sequence belongs to the universal ribosomal protein uL15 family. In terms of assembly, part of the 50S ribosomal subunit.

Functionally, binds to the 23S rRNA. This Francisella tularensis subsp. tularensis (strain FSC 198) protein is Large ribosomal subunit protein uL15.